Reading from the N-terminus, the 952-residue chain is Calsyntenin-1 (952 aa).

The first 28 residues, methionine 1–alanine 28, serve as a signal peptide directing secretion. At alanine 29–threonine 830 the chain is on the extracellular side. Cadherin domains are found at residues leucine 38 to phenylalanine 154 and lysine 155 to tryptophan 255. N-linked (GlcNAc...) asparagine glycosylation is present at asparagine 356. The helical transmembrane segment at alanine 831–phenylalanine 851 threads the bilayer. The Cytoplasmic portion of the chain corresponds to arginine 852 to tyrosine 952. The tract at residues methionine 886–tyrosine 952 is disordered. Over residues glutamate 896–glycine 930 the composition is skewed to acidic residues. Residues glycine 934–tyrosine 952 are compositionally biased toward polar residues.

Belongs to the calsyntenin family. In terms of assembly, directly interacts with APBA2. Forms a tripartite complex with APBA2 and APP. Interacts with KLC1. As to quaternary structure, interacts with APBB1; this interaction stabilizes AlcICD metabolism. Interacts with PSEN1. Proteolytically processed under normal cellular conditions. A primary zeta-cleavage generates a large extracellular (soluble) N-terminal domain (sAlc) and a short C-terminal transmembrane fragment (CTF1). A secondary cleavage catalyzed by presenilin gamma-secretase within the transmembrane domain releases the beta-Alc-alpha chain in the extracellular milieu and produces an intracellular fragment (AlcICD). This processing is strongly suppressed in the tripartite complex formed with APBA2 and APP, which seems to prevent the association with PSEN1. As to expression, preferentially expressed in the retina and brain.

It localises to the postsynaptic cell membrane. Its subcellular location is the endoplasmic reticulum membrane. The protein resides in the golgi apparatus membrane. The protein localises to the cell projection. It is found in the neuron projection. It localises to the nucleus. In terms of biological role, postsynaptic adhesion molecule that binds to presynaptic neurexins to mediate both excitatory and inhibitory synapse formation. Promotes synapse development by acting as a cell adhesion molecule at the postsynaptic membrane, which associates with neurexin-alpha at the presynaptic membrane. Also functions as a cargo in axonal anterograde transport by acting as a molecular adapter that promotes KLC1 association with vesicles. Complex formation with APBA2 and APP, stabilizes APP metabolism and enhances APBA2-mediated suppression of beta-APP40 secretion, due to the retardation of intracellular APP maturation. Functionally, as intracellular fragment AlcICD, suppresses APBB1-dependent transactivation stimulated by APP C-terminal intracellular fragment (AICD), most probably by competing with AICD for APBB1-binding. Its function is as follows. In complex with APBA2 and C99, a C-terminal APP fragment, abolishes C99 interaction with PSEN1 and thus APP C99 cleavage by gamma-secretase, most probably through stabilization of the direct interaction between APBA2 and APP. The sequence is that of Calsyntenin-1 (Clstn1) from Rattus norvegicus (Rat).